A 107-amino-acid polypeptide reads, in one-letter code: Proteinase inhibitor I-A (107 aa).

A signal peptide spans 1–22; sequence MVKFAHVVAFLLLASLIQPLTA. Positions 23 to 36 are excised as a propeptide; that stretch reads RDLEINVLQLDVSQ.

This sequence belongs to the protease inhibitor I13 (potato type I serine protease inhibitor) family.

The protein localises to the secreted. The chain is Proteinase inhibitor I-A (TIMPB) from Nicotiana tabacum (Common tobacco).